Consider the following 296-residue polypeptide: Uricase (296 aa).

Residues Lys-14 and Thr-61 each act as charge relay system in the active site. Residues Thr-61, Asp-62, Phe-163, Arg-180, Val-229, Gln-230, and Asn-256 each contribute to the urate site. The active-site Charge relay system is His-258.

The protein belongs to the uricase family.

Its subcellular location is the peroxisome. It localises to the cytoplasm. It is found in the nucleus. It carries out the reaction urate + O2 + H2O = 5-hydroxyisourate + H2O2. The protein operates within purine metabolism; urate degradation; (S)-allantoin from urate: step 1/3. Functionally, catalyzes the oxidation of uric acid to 5-hydroxyisourate, which is further processed to form (S)-allantoin. This Schizosaccharomyces pombe (strain 972 / ATCC 24843) (Fission yeast) protein is Uricase.